The following is a 498-amino-acid chain: MPRYSITTFGCQMNVHDSERMHDVLRCAGYTEAGSADEADVLVLNTCSVREKAEQKLRSEVGRLARWKRERADRVLVVAGCVAQQEGERLLKQMRAIDVVVGPDNIPELPGLLGDLAIGGLPIARTVFDLDAPRFLVASPPSPSSSSSPRAAPTAFVTVMKGCDERCSFCIVPHTRGPERYRPSDEIVAEIAALVAAGTREVTLLGQTVNSYRDPLGALPRAPGASADDPDESEFAALLRRVAADVPGLARLRYTSPHPRHLTPSLVLAHAELPVLPRHVHMPVQSGSDRVLRRMIRRYTRAEYVARTRALVEAVPGLTLSTDIIVGFPGETEDDFAATLSLVREVGFKGLFGFKYSRRPHTPALKLPDDVPEGVKGERLARLFEESEALLAAHLSALVGTTQEVLVEGRDKERGHGGAGGALWSGRTGRHEIAHIDGAGELDLLGEVVEVSIARANKHSLQAELTEAARAAARPRQRGGLEPRPARRSLPVVAAEGG.

Residues 2 to 118 (PRYSITTFGC…LPGLLGDLAI (117 aa)) form the MTTase N-terminal domain. Residues Cys11, Cys47, Cys81, Cys163, Cys167, and Cys170 each contribute to the [4Fe-4S] cluster site. The 245-residue stretch at 149–393 (PRAAPTAFVT…FEESEALLAA (245 aa)) folds into the Radical SAM core domain. Residues 396-467 (SALVGTTQEV…KHSLQAELTE (72 aa)) enclose the TRAM domain. The interval 469 to 498 (ARAAARPRQRGGLEPRPARRSLPVVAAEGG) is disordered.

It belongs to the methylthiotransferase family. MiaB subfamily. Monomer. [4Fe-4S] cluster serves as cofactor.

Its subcellular location is the cytoplasm. The catalysed reaction is N(6)-dimethylallyladenosine(37) in tRNA + (sulfur carrier)-SH + AH2 + 2 S-adenosyl-L-methionine = 2-methylsulfanyl-N(6)-dimethylallyladenosine(37) in tRNA + (sulfur carrier)-H + 5'-deoxyadenosine + L-methionine + A + S-adenosyl-L-homocysteine + 2 H(+). Functionally, catalyzes the methylthiolation of N6-(dimethylallyl)adenosine (i(6)A), leading to the formation of 2-methylthio-N6-(dimethylallyl)adenosine (ms(2)i(6)A) at position 37 in tRNAs that read codons beginning with uridine. This chain is tRNA-2-methylthio-N(6)-dimethylallyladenosine synthase, found in Sorangium cellulosum (strain So ce56) (Polyangium cellulosum (strain So ce56)).